Here is a 113-residue protein sequence, read N- to C-terminus: Phosphorelay protein LuxU (113 aa).

Residues 18-113 (GEENVPILVN…THQCYSDLVH (96 aa)) form the HPt domain. His-57 bears the Phosphohistidine mark.

In terms of assembly, monomer.

In terms of biological role, phosphorelay protein which receives sensory signals from a sensory kinase and transmit them to LuxO. At low cell density, a phosphoryl group is transferred from the sensory kinase, probably on His-57 and this phosphoryl group is further transferred to LuxO. The protein is Phosphorelay protein LuxU (luxU) of Vibrio cholerae serotype O1 (strain ATCC 39315 / El Tor Inaba N16961).